The chain runs to 331 residues: GTP-binding protein RHO5 (331 aa).

Residue 10–17 (GDGAVGKT) participates in GTP binding. Positions 51–76 (ASSPLELDNGNDKRGSLSSASSSPST) are disordered. Over residues 66-75 (SLSSASSSPS) the composition is skewed to low complexity. Residues 87–91 (DTAGQ) and 156–159 (TKSD) contribute to the GTP site. 2 positions are modified to phosphoserine: Ser223 and Ser228. Phosphothreonine is present on residues Thr232 and Thr244. The segment at 239 to 331 (TATTNTNGDK…KKKKSKCVIL (93 aa)) is disordered. The segment covering 258–273 (HHNNSTDSTLPKGSLQ) has biased composition (polar residues). A Glycyl lysine isopeptide (Lys-Gly) (interchain with G-Cter in ubiquitin) cross-link involves residue Lys276. Residues 287 to 297 (GQKDKIHEQSK) are compositionally biased toward basic and acidic residues. A compositionally biased stretch (basic residues) spans 308–331 (HHNKQAKPKTRNDKKKKKSKCVIL). Cys328 carries the post-translational modification Cysteine methyl ester. A lipid anchor (S-geranylgeranyl cysteine) is attached at Cys328. Positions 329–331 (VIL) are cleaved as a propeptide — removed in mature form.

This sequence belongs to the small GTPase superfamily. Rho family. In terms of assembly, interacts with RGD2.

It is found in the membrane. The protein resides in the mitochondrion. Functionally, small GTPase that negatively regulates a MAP kinase branch, downstream of SLT2, of the PKC1-mediated signal transduction pathway. With its specific guanine nucleotide exchange factor (GEF), the heterodimeric complex DCK1/LMO1, relocates to mitochondria upon oxidative stress and triggers cell death. The DCK1/LMO1/RHO5 signaling module that mediates mitochondrial turnover under nitrogen starvation conditions via mitophagy. The DCK1/LMO1/RHO5 signaling module also plays a role in cell wall integrity signaling. The chain is GTP-binding protein RHO5 from Saccharomyces cerevisiae (strain ATCC 204508 / S288c) (Baker's yeast).